Consider the following 148-residue polypeptide: MKVILKENVENLGHIGDIVKVAPGYARNYLIPRNFAIEATEKNAKALEHAKRQLEYKRNKVLEQARLLVAKIEGLSLSISHQAGEEGKLFGSVTNMELAELLKAQGVEIDRKKIVLAEPIKHVGEFTAVVKVHPEVAANLKVVVTKAE.

Belongs to the bacterial ribosomal protein bL9 family.

In terms of biological role, binds to the 23S rRNA. The protein is Large ribosomal subunit protein bL9 of Geobacter sulfurreducens (strain ATCC 51573 / DSM 12127 / PCA).